A 350-amino-acid polypeptide reads, in one-letter code: WUSCHEL-related homeobox 1 (350 aa).

The segment at residues 72–136 (MVSSRWNPTP…NHKARERQKR (65 aa)) is a DNA-binding region (homeobox; WUS-type). Positions 283-308 (TNTETCHRNGDDNKDQEQHEDCSNGE) are disordered.

The protein belongs to the WUS homeobox family.

Its subcellular location is the nucleus. In terms of biological role, transcription factor which may be involved in developmental processes. The chain is WUSCHEL-related homeobox 1 (WOX1) from Arabidopsis thaliana (Mouse-ear cress).